A 107-amino-acid chain; its full sequence is MAGSYGVMADDGSIDYTVHEAWNEATNVYLIVILVSFGLFMYAKRNKRKIMRIFSVPPTEGMLSEPSFYDTVSRIRLRQQVEAHPVSRKYEYQQPQSQADSVQLSLE.

Residues 25 to 43 (ATNVYLIVILVSFGLFMYA) traverse the membrane as a helical segment. The segment at 88-107 (RKYEYQQPQSQADSVQLSLE) is disordered. Residues 93 to 107 (QQPQSQADSVQLSLE) are compositionally biased toward polar residues.

This sequence belongs to the SMIM19 family.

The protein localises to the membrane. The protein is Small integral membrane protein 19 (Smim19) of Mus musculus (Mouse).